Here is a 268-residue protein sequence, read N- to C-terminus: Ribosomal RNA small subunit methyltransferase A (268 aa).

6 residues coordinate S-adenosyl-L-methionine: asparagine 23, isoleucine 25, glycine 50, glutamate 72, aspartate 97, and asparagine 116.

It belongs to the class I-like SAM-binding methyltransferase superfamily. rRNA adenine N(6)-methyltransferase family. RsmA subfamily.

The protein localises to the cytoplasm. It carries out the reaction adenosine(1518)/adenosine(1519) in 16S rRNA + 4 S-adenosyl-L-methionine = N(6)-dimethyladenosine(1518)/N(6)-dimethyladenosine(1519) in 16S rRNA + 4 S-adenosyl-L-homocysteine + 4 H(+). In terms of biological role, specifically dimethylates two adjacent adenosines (A1518 and A1519) in the loop of a conserved hairpin near the 3'-end of 16S rRNA in the 30S particle. May play a critical role in biogenesis of 30S subunits. This is Ribosomal RNA small subunit methyltransferase A from Rickettsia bellii (strain OSU 85-389).